The following is a 31-amino-acid chain: Cytochrome b6-f complex subunit 6 (31 aa).

Residues 4 to 24 (VISYFGFLLVALAFTLVTYLG) traverse the membrane as a helical segment.

It belongs to the PetL family. The 4 large subunits of the cytochrome b6-f complex are cytochrome b6, subunit IV (17 kDa polypeptide, PetD), cytochrome f and the Rieske protein, while the 4 small subunits are PetG, PetL, PetM and PetN. The complex functions as a dimer.

Its subcellular location is the plastid. The protein resides in the chloroplast thylakoid membrane. In terms of biological role, component of the cytochrome b6-f complex, which mediates electron transfer between photosystem II (PSII) and photosystem I (PSI), cyclic electron flow around PSI, and state transitions. PetL is important for photoautotrophic growth as well as for electron transfer efficiency and stability of the cytochrome b6-f complex. This is Cytochrome b6-f complex subunit 6 from Nephroselmis olivacea (Green alga).